We begin with the raw amino-acid sequence, 641 residues long: DEAD-box ATP-dependent RNA helicase 50 (641 aa).

3 disordered regions span residues 86 to 115 (SMPSPAVLSTTTRVPDRPKENGRSTSIGNF), 129 to 189 (RSAH…LNSV), and 197 to 216 (DDLDFPGSEATSGSKRWGNI). The segment covering 150-159 (PSDESDEDGT) has biased composition (acidic residues). The Q motif signature appears at 240–268 (RSFKEIGCSDEILGALRSFGFPRPSHIQA). Residues 271–452 (YRPVLEGKSC…VETFPDCELI (182 aa)) form the Helicase ATP-binding domain. 284 to 291 (DQSGSGKT) lines the ATP pocket. The short motif at 399–402 (DEVD) is the DEAD box element. The region spanning 487–641 (NKKSALVKII…GHPLHDVPCV (155 aa)) is the Helicase C-terminal domain.

This sequence belongs to the DEAD box helicase family.

The enzyme catalyses ATP + H2O = ADP + phosphate + H(+). Functionally, probably involved in resistance to biotic and abiotic stresses. Confers tolerance to oxidative stress and mediates pathogenesis-related (PR) genes expression. Exhibits RNA-dependent ATPase and ATP-dependent RNA helicase activities in vitro. The protein is DEAD-box ATP-dependent RNA helicase 50 of Oryza sativa subsp. japonica (Rice).